The primary structure comprises 452 residues: Argininosuccinate lyase (452 aa).

The interval 431–452 (AFRKDSTGSTSPKWSFRAMRRA) is disordered.

It belongs to the lyase 1 family. Argininosuccinate lyase subfamily.

It localises to the cytoplasm. It catalyses the reaction 2-(N(omega)-L-arginino)succinate = fumarate + L-arginine. Its pathway is amino-acid biosynthesis; L-arginine biosynthesis; L-arginine from L-ornithine and carbamoyl phosphate: step 3/3. The chain is Argininosuccinate lyase from Tremblaya princeps.